The sequence spans 257 residues: UPF0246 protein lpg1366 (257 aa).

It belongs to the UPF0246 family.

The sequence is that of UPF0246 protein lpg1366 from Legionella pneumophila subsp. pneumophila (strain Philadelphia 1 / ATCC 33152 / DSM 7513).